The primary structure comprises 245 residues: Orotidine 5'-phosphate decarboxylase (245 aa).

Residues D22, K44, 71–80 (DLKFHDIPNT), T131, R192, Q201, G221, and R222 each bind substrate. The Proton donor role is filled by K73.

The protein belongs to the OMP decarboxylase family. Type 1 subfamily. Homodimer.

It carries out the reaction orotidine 5'-phosphate + H(+) = UMP + CO2. Its pathway is pyrimidine metabolism; UMP biosynthesis via de novo pathway; UMP from orotate: step 2/2. Catalyzes the decarboxylation of orotidine 5'-monophosphate (OMP) to uridine 5'-monophosphate (UMP). The polypeptide is Orotidine 5'-phosphate decarboxylase (Salmonella newport (strain SL254)).